A 125-amino-acid polypeptide reads, in one-letter code: Large ribosomal subunit protein bL12 (125 aa).

Belongs to the bacterial ribosomal protein bL12 family. Homodimer. Part of the ribosomal stalk of the 50S ribosomal subunit. Forms a multimeric L10(L12)X complex, where L10 forms an elongated spine to which 2 to 4 L12 dimers bind in a sequential fashion. Binds GTP-bound translation factors.

In terms of biological role, forms part of the ribosomal stalk which helps the ribosome interact with GTP-bound translation factors. Is thus essential for accurate translation. In Campylobacter concisus (strain 13826), this protein is Large ribosomal subunit protein bL12.